The primary structure comprises 506 residues: Maturase K (506 aa).

The protein belongs to the intron maturase 2 family. MatK subfamily.

The protein resides in the plastid. It is found in the chloroplast. Functionally, usually encoded in the trnK tRNA gene intron. Probably assists in splicing its own and other chloroplast group II introns. This Phyllodoce caerulea (Blue mountain heath) protein is Maturase K.